A 652-amino-acid chain; its full sequence is Acetyl-coenzyme A synthetase (652 aa).

CoA is bound by residues 191–194 (RAGR), T311, and N335. ATP contacts are provided by residues 387-389 (GEP), 411-416 (DTWWQT), D500, and R515. S523 serves as a coordination point for CoA. R526 contacts ATP. 3 residues coordinate Mg(2+): V537, H539, and I542. Residue R584 participates in CoA binding. At K609 the chain carries N6-acetyllysine.

The protein belongs to the ATP-dependent AMP-binding enzyme family. Mg(2+) is required as a cofactor. Acetylated. Deacetylation by the SIR2-homolog deacetylase activates the enzyme.

The catalysed reaction is acetate + ATP + CoA = acetyl-CoA + AMP + diphosphate. In terms of biological role, catalyzes the conversion of acetate into acetyl-CoA (AcCoA), an essential intermediate at the junction of anabolic and catabolic pathways. Acs undergoes a two-step reaction. In the first half reaction, Acs combines acetate with ATP to form acetyl-adenylate (AcAMP) intermediate. In the second half reaction, it can then transfer the acetyl group from AcAMP to the sulfhydryl group of CoA, forming the product AcCoA. Functionally, enables the cell to use acetate during aerobic growth to generate energy via the TCA cycle, and biosynthetic compounds via the glyoxylate shunt. Acetylates CheY, the response regulator involved in flagellar movement and chemotaxis. The polypeptide is Acetyl-coenzyme A synthetase (Yersinia pseudotuberculosis serotype I (strain IP32953)).